The chain runs to 190 residues: Somatotropin (190 aa).

Histidine 19 provides a ligand contact to Zn(2+). A disulfide bond links cysteine 52 and cysteine 163. Glutamate 172 contacts Zn(2+). Cysteine 180 and cysteine 188 are disulfide-bonded.

This sequence belongs to the somatotropin/prolactin family.

The protein resides in the secreted. Its function is as follows. Growth hormone plays an important role in growth control and involved in the regulation of several anabolic processes. The protein is Somatotropin (GH) of Crocodylus novaeguineae (Crocodile).